The primary structure comprises 405 residues: Aspartokinase (405 aa).

2 consecutive ACT domains span residues 267-344 (VSME…AKVS) and 345-405 (IVGV…QLDQ).

It belongs to the aspartokinase family.

The catalysed reaction is L-aspartate + ATP = 4-phospho-L-aspartate + ADP. It participates in amino-acid biosynthesis; L-lysine biosynthesis via DAP pathway; (S)-tetrahydrodipicolinate from L-aspartate: step 1/4. It functions in the pathway amino-acid biosynthesis; L-methionine biosynthesis via de novo pathway; L-homoserine from L-aspartate: step 1/3. Its pathway is amino-acid biosynthesis; L-threonine biosynthesis; L-threonine from L-aspartate: step 1/5. The sequence is that of Aspartokinase (lysC) from Helicobacter pylori (strain J99 / ATCC 700824) (Campylobacter pylori J99).